A 92-amino-acid chain; its full sequence is DNA-directed RNA polymerase subunit omega (92 aa).

This sequence belongs to the RNA polymerase subunit omega family. The RNAP catalytic core consists of 2 alpha, 1 beta, 1 beta' and 1 omega subunit. When a sigma factor is associated with the core the holoenzyme is formed, which can initiate transcription.

It carries out the reaction RNA(n) + a ribonucleoside 5'-triphosphate = RNA(n+1) + diphosphate. Functionally, promotes RNA polymerase assembly. Latches the N- and C-terminal regions of the beta' subunit thereby facilitating its interaction with the beta and alpha subunits. The polypeptide is DNA-directed RNA polymerase subunit omega (Shewanella frigidimarina (strain NCIMB 400)).